The following is a 211-amino-acid chain: MTQVIQLKRYEFPQLPYKVDALEPYISKDIIDVHYNGHHKGYVNGANSLLDRLEKLIKGDLPQGQYDLQGILRGLTFNINGHKLHAIYWNNMAPAGKGGGKPGGALADLINKQYGSFDRFKQVFSESANSLPGSGWTVLYYDNESGNLQIMTVENHFMNHIAELPVILIVDEFEHAYYLQYKNKRGDYLNAWWNVVNWDDAEKRLQKYLNK.

Fe cation contacts are provided by H34, H85, D171, and H175.

The protein belongs to the iron/manganese superoxide dismutase family. In terms of assembly, homotetramer at high temperature; homodimer at room temperature. It depends on Fe cation as a cofactor.

It localises to the cytoplasm. The enzyme catalyses 2 superoxide + 2 H(+) = H2O2 + O2. In terms of biological role, destroys superoxide anion radicals which are normally produced within the cells and which are toxic to biological systems. The polypeptide is Superoxide dismutase [Fe] (sod) (Sulfolobus acidocaldarius (strain ATCC 33909 / DSM 639 / JCM 8929 / NBRC 15157 / NCIMB 11770)).